The chain runs to 491 residues: Galactose-1-phosphate uridylyltransferase (491 aa).

Belongs to the galactose-1-phosphate uridylyltransferase type 2 family.

It is found in the cytoplasm. The enzyme catalyses alpha-D-galactose 1-phosphate + UDP-alpha-D-glucose = alpha-D-glucose 1-phosphate + UDP-alpha-D-galactose. It participates in carbohydrate metabolism; galactose metabolism. This chain is Galactose-1-phosphate uridylyltransferase (galT), found in Streptococcus mutans serotype c (strain ATCC 700610 / UA159).